The following is a 590-amino-acid chain: Pescadillo homolog (590 aa).

Residues V332–V422 form the BRCT domain. The interval A561 to S590 is disordered.

This sequence belongs to the pescadillo family. Interacts with BOP1 and WDR12. Interacts with NSN1. As to expression, expressed in shoot and root apical meristems, epidermal cells and vasculature of developing leaves, trichome progenitor cells, young flowers, developing pollen grains and ovules, and mature pollen grains.

It localises to the nucleus. It is found in the nucleolus. The protein localises to the nucleoplasm. In terms of biological role, required for maturation of ribosomal RNAs and formation of the large ribosomal subunit. Plays an essential role in cell growth and survival through its regulation of ribosome biogenesis and mitotic progression. Required for normal root cell growth and differentiation. In Arabidopsis thaliana (Mouse-ear cress), this protein is Pescadillo homolog.